A 341-amino-acid chain; its full sequence is Geranylfarnesyl diphosphate synthase (341 aa).

Residues K47, R50, and Q95 each contribute to the isopentenyl diphosphate site. Residues D102 and D106 each coordinate Mg(2+). R111 lines the an all-trans-polyprenyl diphosphate pocket. R112 provides a ligand contact to isopentenyl diphosphate. K193, T194, and Q231 together coordinate an all-trans-polyprenyl diphosphate.

This sequence belongs to the FPP/GGPP synthase family. In terms of assembly, homodimer. The cofactor is Mg(2+).

The protein resides in the cytoplasm. The enzyme catalyses isopentenyl diphosphate + (2E,6E,10E)-geranylgeranyl diphosphate = (2E,6E,10E,14E)-geranylfarnesyl diphosphate + diphosphate. In terms of biological role, probably involved in biosynthesis of the precursor for C25 (sesterterpanyl chain) moiety of C20-C25 diether (2-O-sesterterpanyl-3-O-phytanyl-sn-glycer) membrane lipid. Catalyzes the condensation of isopentenyl pyrophosphate with the allylic pyrophosphates to yield geranylfarnesyl diphosphate (GFPP). Geranylgeranyl diphosphate (GGPP) is the preferred substrate, but dimethylallyl diphosphate (DMAPP) and farnesyl diphosphate (FPP) can also be used as allylic substrate. The chain is Geranylfarnesyl diphosphate synthase (idsA3) from Natronomonas pharaonis (strain ATCC 35678 / DSM 2160 / CIP 103997 / JCM 8858 / NBRC 14720 / NCIMB 2260 / Gabara) (Halobacterium pharaonis).